A 237-amino-acid polypeptide reads, in one-letter code: Class B acid phosphatase (237 aa).

Positions 1–23 are cleaved as a signal peptide; sequence MKKITLALSAVCLLFTLNHSANA. Asp69 acts as the Nucleophile in catalysis. Positions 69 and 71 each coordinate Mg(2+). The active-site Proton donor is Asp71. Substrate is bound by residues 137 to 138 and Lys177; that span reads TG. Asp192 is a binding site for Mg(2+).

Belongs to the class B bacterial acid phosphatase family. Homotetramer. The cofactor is Mg(2+).

Its subcellular location is the periplasm. It catalyses the reaction a phosphate monoester + H2O = an alcohol + phosphate. Functionally, dephosphorylates several organic phosphate monoesters including monophosphate nucleotides (NMPs), coenzyme A (CoA), nicotinamide adenine dinucleotide phosphate (NADP), flavin mononucleotide (FMN) and phosphorylated 5-6 carbon sugars in vitro. Also has a phosphotransferase activity catalyzing the transfer of low-energy phosphate groups from organic phosphate monoesters to free hydroxyl groups of various organic compounds. This chain is Class B acid phosphatase (aphA), found in Salmonella typhi.